The chain runs to 355 residues: Carbohydrate sulfotransferase 10 (355 aa).

Topologically, residues 1–6 are cytoplasmic; it reads MHHRWL. A helical; Signal-anchor for type II membrane protein membrane pass occupies residues 7–27; the sequence is LLVACFWVLFMLMVASKLITL. The Lumenal segment spans residues 28-355; that stretch reads TMKDPEGYGN…FGYKEPTFLF (328 aa). N-linked (GlcNAc...) asparagine glycosylation is found at N93 and N98. 3'-phosphoadenylyl sulfate is bound by residues 126 to 132 and 188 to 196; these read PKVGNTQ and RDPFERLIS. N316 carries N-linked (GlcNAc...) asparagine glycosylation.

Belongs to the sulfotransferase 2 family.

The protein resides in the golgi apparatus membrane. In terms of biological role, catalyzes the transfer of sulfate to position 3 of terminal glucuronic acid of both protein- and lipid-linked oligosaccharides. Participates in biosynthesis of HNK-1 carbohydrate structure, a sulfated glucuronyl-lactosaminyl residue carried by many neural recognition molecules. The protein is Carbohydrate sulfotransferase 10 (chst10) of Xenopus laevis (African clawed frog).